The following is a 618-amino-acid chain: Tyrosine-protein kinase ZAP-70 (618 aa).

An SH2 1 domain is found at 10–102; it reads FFYGSISRAE…GLPCNLRKPC (93 aa). Residues 103 to 162 are interdomain A; sequence NRPPGLEPQPGVFDCLRDAMVRDYVRQTWKLEGDALEQAIISQAPQVEKLIATTAHERMP. One can recognise an SH2 2 domain in the interval 163–254; it reads WYHSSLTREE…GLIYRLKEVC (92 aa). Tyr248 carries the post-translational modification Phosphotyrosine. The segment at 255 to 336 is interdomain B; the sequence is PNSSASAAVA…KKLFLKRENL (82 aa). The disordered stretch occupies residues 270 to 320; it reads AHPSTFTQPQRRVDTLNSDGYTPEPARLASSTDKPRPMPMDTSVYESPYSD. The span at 273 to 289 shows a compositional bias: polar residues; sequence STFTQPQRRVDTLNSDG. Ser287 carries the phosphoserine modification. At Tyr290 the chain carries Phosphotyrosine. Phosphotyrosine; by LCK is present on Tyr314. Tyr318 is modified (phosphotyrosine). One can recognise a Protein kinase domain in the interval 337–597; it reads LVADIELGCG…VEQRMRNYYY (261 aa). ATP-binding positions include 343–351 and Lys368; that span reads LGCGNFGSV. Asp460 serves as the catalytic Proton acceptor. A phosphotyrosine mark is found at Tyr491 and Tyr492. Lys543 participates in a covalent cross-link: Glycyl lysine isopeptide (Lys-Gly) (interchain with G-Cter in ubiquitin).

The protein belongs to the protein kinase superfamily. Tyr protein kinase family. SYK/ZAP-70 subfamily. In terms of assembly, interacts with CD247/CD3Z; this interaction docks ZAP70 at the stimulated TCR. Interacts with NFAM1. Interacts with adapter protein SLA; this interaction negatively regulates T-cell receptor signaling. Interacts with VAV1. Interacts with CBL; this interaction promotes ubiquitination, internalization and subsequent degradation of CD247/CD3Z. Identified in a complex with CBL and UBE2L3. Interacts with SHB. Interacts with adapter protein SLA2; this interaction negatively regulates T-cell receptor signaling. Interacts with CBLB. Interacts (via SH2 domains) with RHOH; this interaction regulates ZAP70 subcellular localization. Interacts with DEF6. Interacts (ubiquitinated form) with OTUD7B and UBASH3B. Post-translationally, phosphorylated on tyrosine residues upon T-cell antigen receptor (TCR) stimulation. Phosphorylation of Tyr-314 and Tyr-314 are essential for ZAP70 positive function on T-lymphocyte activation whereas Tyr-290 has a negative regulatory role. Within the C-terminal kinase domain, Tyr-491 and Tyr-492 are phosphorylated after TCR induction, Tyr-491 playing a negative regulatory role and Tyr-492 a positive. Tyr-492 is dephosphorylated by PTN22. In terms of processing, ubiquitinated in response to T cell activation. Deubiquitinated by OTUD7B. Isoform 1 and isoform 2 are expressed in thymus, spleen and lymph nodes.

The protein localises to the cytoplasm. It is found in the cell membrane. The enzyme catalyses L-tyrosyl-[protein] + ATP = O-phospho-L-tyrosyl-[protein] + ADP + H(+). Activated by phosphorylation at Tyr-492 in the activation loop. Functionally, tyrosine kinase that plays an essential role in regulation of the adaptive immune response. Regulates motility, adhesion and cytokine expression of mature T-cells, as well as thymocyte development. Also contributes to the development and activation of primary B-lymphocytes. When antigen presenting cells (APC) activate T-cell receptor (TCR), a serie of phosphorylations lead to the recruitment of ZAP70 to the doubly phosphorylated TCR component CD3Z through ITAM motif at the plasma membrane. This recruitment serves to localization to the stimulated TCR and to relieve its autoinhibited conformation. Release of ZAP70 active conformation is further stabilized by phosphorylation mediated by LCK. Subsequently, ZAP70 phosphorylates at least 2 essential adapter proteins: LAT and LCP2. In turn, a large number of signaling molecules are recruited and ultimately lead to lymphokine production, T-cell proliferation and differentiation. Furthermore, ZAP70 controls cytoskeleton modifications, adhesion and mobility of T-lymphocytes, thus ensuring correct delivery of effectors to the APC. ZAP70 is also required for TCR-CD3Z internalization and degradation through interaction with the E3 ubiquitin-protein ligase CBL and adapter proteins SLA and SLA2. Thus, ZAP70 regulates both T-cell activation switch on and switch off by modulating TCR expression at the T-cell surface. During thymocyte development, ZAP70 promotes survival and cell-cycle progression of developing thymocytes before positive selection (when cells are still CD4/CD8 double negative). Additionally, ZAP70-dependent signaling pathway may also contribute to primary B-cells formation and activation through B-cell receptor (BCR). This is Tyrosine-protein kinase ZAP-70 (Zap70) from Mus musculus (Mouse).